Here is a 907-residue protein sequence, read N- to C-terminus: Protein translocase subunit SecA (907 aa).

ATP-binding positions include glutamine 87, 105 to 109 (GEGKT), and aspartate 511. 4 residues coordinate Zn(2+): cysteine 891, cysteine 893, cysteine 902, and histidine 903.

It belongs to the SecA family. As to quaternary structure, monomer and homodimer. Part of the essential Sec protein translocation apparatus which comprises SecA, SecYEG and auxiliary proteins SecDF-YajC and YidC. It depends on Zn(2+) as a cofactor.

The protein localises to the cell inner membrane. The protein resides in the cytoplasm. The catalysed reaction is ATP + H2O + cellular proteinSide 1 = ADP + phosphate + cellular proteinSide 2.. Functionally, part of the Sec protein translocase complex. Interacts with the SecYEG preprotein conducting channel. Has a central role in coupling the hydrolysis of ATP to the transfer of proteins into and across the cell membrane, serving both as a receptor for the preprotein-SecB complex and as an ATP-driven molecular motor driving the stepwise translocation of polypeptide chains across the membrane. This Aromatoleum aromaticum (strain DSM 19018 / LMG 30748 / EbN1) (Azoarcus sp. (strain EbN1)) protein is Protein translocase subunit SecA.